A 578-amino-acid chain; its full sequence is Signal peptide peptidase-like 2B (578 aa).

The N-terminal stretch at 1 to 19 is a signal peptide; the sequence is MAAARLAAALLLLAAQVAC. The Lumenal segment spans residues 20 to 168; that stretch reads EFGVLRVVSQ…APSEPVMDYN (149 aa). The PA domain maps to 61-145; that stretch reads LRDLSTTQLC…LLSHRDLQDI (85 aa). Asn91 and Asn123 each carry an N-linked (GlcNAc...) asparagine glycan. The chain crosses the membrane as a helical span at residues 169-189; that stretch reads MVIIFVMAVGTVAIGGYWAGS. The Cytoplasmic segment spans residues 190–216; that stretch reads HDVKKYMKHKRDDGPEKQEDEAVDVTP. The helical transmembrane segment at 217 to 237 threads the bilayer; the sequence is VMICVFVVMCCFMLVLLYYFY. Topologically, residues 238 to 239 are lumenal; sequence DR. Residues 240–260 form a helical membrane-spanning segment; it reads LVYVIIGIFCLASSTGLYSCL. Residues 261 to 286 are Cytoplasmic-facing; sequence APFVRKLPFCTCRVPDNNLPYFHKRP. The helical transmembrane segment at 287-307 threads the bilayer; it reads QARMLLLALFCVTVSVVWGIF. At 308 to 312 the chain is on the lumenal side; it reads RNEDQ. A helical membrane pass occupies residues 313 to 333; that stretch reads WAWVLQDTLGIAFCLYMLKTI. Over 334–341 the chain is Cytoplasmic; sequence RLPTFKAC. A helical transmembrane segment spans residues 342 to 362; the sequence is TLLLLVLFIYDIFFVFITPFL. Asp352 is an active-site residue. Residues 363 to 405 are Lumenal-facing; the sequence is TKSGNSIMVEVATGPSNSSTHEKLPMVLKVPRLNTSPLSLCDR. Residues 406-426 traverse the membrane as a helical segment; that stretch reads PFSLLGFGDILVPGLLVAYCH. Asp414 is an active-site residue. Topologically, residues 427 to 438 are cytoplasmic; that stretch reads RFDIQVQSSRIY. Residues 439-459 traverse the membrane as a helical segment; the sequence is FVACTIAYGLGLLVTFVALVL. The Lumenal segment spans residues 460–463; it reads MQRG. A helical transmembrane segment spans residues 464–484; that stretch reads QPALLYLVPCTLLTSCTVALW. The PAL signature appears at 465–467; it reads PAL. Residues 485 to 578 lie on the Cytoplasmic side of the membrane; that stretch reads RRELGAFWTG…IPVVKPETSA (94 aa). The segment at 502 to 578 is disordered; it reads PQTPWAATQG…IPVVKPETSA (77 aa). Over residues 520–529 the composition is skewed to low complexity; the sequence is SSLSEQPPSE.

It belongs to the peptidase A22B family. As to quaternary structure, monomer. Homodimer. Interacts with ITM2B and TNF. Post-translationally, glycosylated.

It is found in the cell membrane. It localises to the golgi apparatus membrane. The protein localises to the lysosome membrane. Its subcellular location is the endosome membrane. The protein resides in the membrane. Functionally, intramembrane-cleaving aspartic protease (I-CLiP) that cleaves type II membrane signal peptides in the hydrophobic plane of the membrane. Functions in ITM2B and TNF processing. Catalyzes the intramembrane cleavage of the anchored fragment of shed TNF-alpha (TNF), which promotes the release of the intracellular domain (ICD) for signaling to the nucleus. May play a role in the regulation of innate and adaptive immunity. The polypeptide is Signal peptide peptidase-like 2B (Mus musculus (Mouse)).